The sequence spans 271 residues: Shikimate kinase (271 aa).

Residue 83–93 (PIAMGLKSSSA) coordinates ATP.

Belongs to the GHMP kinase family. Archaeal shikimate kinase subfamily.

The protein resides in the cytoplasm. It carries out the reaction shikimate + ATP = 3-phosphoshikimate + ADP + H(+). It functions in the pathway metabolic intermediate biosynthesis; chorismate biosynthesis; chorismate from D-erythrose 4-phosphate and phosphoenolpyruvate: step 5/7. The polypeptide is Shikimate kinase (Thermococcus kodakarensis (strain ATCC BAA-918 / JCM 12380 / KOD1) (Pyrococcus kodakaraensis (strain KOD1))).